A 193-amino-acid chain; its full sequence is Thymidine kinase (193 aa).

ATP contacts are provided by residues 9–16 (STMNAGKS) and 87–90 (DEAQ). Residue Glu-88 is the Proton acceptor of the active site. The Zn(2+) site is built by Cys-145, Cys-147, Cys-182, and His-185.

Belongs to the thymidine kinase family. As to quaternary structure, homotetramer.

The protein resides in the cytoplasm. It catalyses the reaction thymidine + ATP = dTMP + ADP + H(+). This is Thymidine kinase from Haemophilus influenzae (strain 86-028NP).